The primary structure comprises 109 residues: Spermidine export protein MdtI (109 aa).

4 helical membrane-spanning segments follow: residues 6 to 26, 36 to 56, 64 to 84, and 88 to 108; these read WIHA…NVFL, VYGI…SQAV, AYAL…WVLF, and LNNK…LIKL.

The protein belongs to the drug/metabolite transporter (DMT) superfamily. Small multidrug resistance (SMR) (TC 2.A.7.1) family. MdtI subfamily. In terms of assembly, forms a complex with MdtJ.

It localises to the cell inner membrane. In terms of biological role, catalyzes the excretion of spermidine. In Klebsiella pneumoniae (strain 342), this protein is Spermidine export protein MdtI.